A 533-amino-acid polypeptide reads, in one-letter code: Probable protein kinase UbiB (533 aa).

Residues 24 to 44 (LILELPMLPWWLRLLGATLPW) form a helical membrane-spanning segment. The 369-residue stretch at 126 to 494 (RFEREPLASA…WKGSRHDWLG (369 aa)) folds into the Protein kinase domain. ATP is bound by residues 132–140 (LASASVAQV) and Lys154. Asp289 serves as the catalytic Proton acceptor. A helical membrane pass occupies residues 510–530 (LGQQLEAWPAWVMLAGGVFLI).

Belongs to the ABC1 family. UbiB subfamily.

The protein localises to the cell inner membrane. Its pathway is cofactor biosynthesis; ubiquinone biosynthesis [regulation]. Its function is as follows. Is probably a protein kinase regulator of UbiI activity which is involved in aerobic coenzyme Q (ubiquinone) biosynthesis. The polypeptide is Probable protein kinase UbiB (Pseudomonas aeruginosa (strain LESB58)).